The following is a 646-amino-acid chain: Tyrosine-protein kinase MasK (646 aa).

Over 1–415 (MSPPQTTLPV…PTAGGRRWRT (415 aa)) the chain is Periplasmic. The Protein kinase domain occupies 25–300 (YVLVRKLAEG…AFADALETFL (276 aa)). ATP contacts are provided by residues 31-39 (LAEGGMAEI) and Lys-57. Asp-163 (proton acceptor) is an active-site residue. The tract at residues 373–410 (TSAQRPGMSMRPSSPGVPAHGAASRGSTSPESAPTAGG) is disordered. A helical transmembrane segment spans residues 416-433 (LAVGLAGGLMLAAAGIVG). Residues 434–646 (YRQWMTTPAS…VMPFSWRVTQ (213 aa)) are Cytoplasmic-facing. The segment at 521-547 (AGAASDVEAEADEEGADAAPVRSKKAS) is disordered. Acidic residues predominate over residues 527–536 (VEAEADEEGA).

It belongs to the protein kinase superfamily. Tyr protein kinase family. Interacts with MglA. In terms of processing, autophosphorylated.

The protein resides in the cell inner membrane. The catalysed reaction is L-tyrosyl-[protein] + ATP = O-phospho-L-tyrosyl-[protein] + ADP + H(+). In terms of biological role, essential for growth. Interacts with MglA to control social gliding motility. This Myxococcus xanthus (strain DK1622) protein is Tyrosine-protein kinase MasK (masK).